The chain runs to 526 residues: GMP synthase [glutamine-hydrolyzing] (526 aa).

Residues 14 to 208 (SILIVDFGSQ…VHDICGLAGD (195 aa)) enclose the Glutamine amidotransferase type-1 domain. The Nucleophile role is filled by Cys-91. Residues His-182 and Glu-184 contribute to the active site. Residues 209 to 401 (WTMAEFRQTK…LGMPDVFVDR (193 aa)) form the GMPS ATP-PPase domain. Residue 236–242 (SGGVDSS) participates in ATP binding.

In terms of assembly, homodimer.

The catalysed reaction is XMP + L-glutamine + ATP + H2O = GMP + L-glutamate + AMP + diphosphate + 2 H(+). It participates in purine metabolism; GMP biosynthesis; GMP from XMP (L-Gln route): step 1/1. Functionally, catalyzes the synthesis of GMP from XMP. The chain is GMP synthase [glutamine-hydrolyzing] from Zymomonas mobilis subsp. mobilis (strain ATCC 31821 / ZM4 / CP4).